A 342-amino-acid polypeptide reads, in one-letter code: Nicotinate-nucleotide--dimethylbenzimidazole phosphoribosyltransferase (342 aa).

Residue E311 is the Proton acceptor of the active site.

Belongs to the CobT family.

It catalyses the reaction 5,6-dimethylbenzimidazole + nicotinate beta-D-ribonucleotide = alpha-ribazole 5'-phosphate + nicotinate + H(+). It functions in the pathway nucleoside biosynthesis; alpha-ribazole biosynthesis; alpha-ribazole from 5,6-dimethylbenzimidazole: step 1/2. Its function is as follows. Catalyzes the synthesis of alpha-ribazole-5'-phosphate from nicotinate mononucleotide (NAMN) and 5,6-dimethylbenzimidazole (DMB). This chain is Nicotinate-nucleotide--dimethylbenzimidazole phosphoribosyltransferase, found in Shewanella sediminis (strain HAW-EB3).